The chain runs to 316 residues: 4-hydroxy-3-methylbut-2-enyl diphosphate reductase (316 aa).

A [4Fe-4S] cluster-binding site is contributed by cysteine 12. (2E)-4-hydroxy-3-methylbut-2-enyl diphosphate is bound by residues histidine 41 and histidine 74. Dimethylallyl diphosphate contacts are provided by histidine 41 and histidine 74. 2 residues coordinate isopentenyl diphosphate: histidine 41 and histidine 74. Residue cysteine 96 coordinates [4Fe-4S] cluster. Histidine 124 contributes to the (2E)-4-hydroxy-3-methylbut-2-enyl diphosphate binding site. A dimethylallyl diphosphate-binding site is contributed by histidine 124. Histidine 124 is an isopentenyl diphosphate binding site. The Proton donor role is filled by glutamate 126. Threonine 167 is a (2E)-4-hydroxy-3-methylbut-2-enyl diphosphate binding site. [4Fe-4S] cluster is bound at residue cysteine 197. Residues serine 225, serine 226, asparagine 227, and serine 269 each contribute to the (2E)-4-hydroxy-3-methylbut-2-enyl diphosphate site. Positions 225, 226, 227, and 269 each coordinate dimethylallyl diphosphate. Residues serine 225, serine 226, asparagine 227, and serine 269 each contribute to the isopentenyl diphosphate site.

The protein belongs to the IspH family. In terms of assembly, homodimer. [4Fe-4S] cluster serves as cofactor.

It carries out the reaction isopentenyl diphosphate + 2 oxidized [2Fe-2S]-[ferredoxin] + H2O = (2E)-4-hydroxy-3-methylbut-2-enyl diphosphate + 2 reduced [2Fe-2S]-[ferredoxin] + 2 H(+). It catalyses the reaction dimethylallyl diphosphate + 2 oxidized [2Fe-2S]-[ferredoxin] + H2O = (2E)-4-hydroxy-3-methylbut-2-enyl diphosphate + 2 reduced [2Fe-2S]-[ferredoxin] + 2 H(+). Its pathway is isoprenoid biosynthesis; dimethylallyl diphosphate biosynthesis; dimethylallyl diphosphate from (2E)-4-hydroxy-3-methylbutenyl diphosphate: step 1/1. It participates in isoprenoid biosynthesis; isopentenyl diphosphate biosynthesis via DXP pathway; isopentenyl diphosphate from 1-deoxy-D-xylulose 5-phosphate: step 6/6. Catalyzes the conversion of 1-hydroxy-2-methyl-2-(E)-butenyl 4-diphosphate (HMBPP) into a mixture of isopentenyl diphosphate (IPP) and dimethylallyl diphosphate (DMAPP). Acts in the terminal step of the DOXP/MEP pathway for isoprenoid precursor biosynthesis. The sequence is that of 4-hydroxy-3-methylbut-2-enyl diphosphate reductase from Enterobacter sp. (strain 638).